The following is a 248-amino-acid chain: Triosephosphate isomerase (248 aa).

9–11 lines the substrate pocket; it reads NWK. The Electrophile role is filled by histidine 94. The Proton acceptor role is filled by glutamate 166. Residues glycine 172, serine 212, and 233-234 contribute to the substrate site; that span reads GG.

The protein belongs to the triosephosphate isomerase family. As to quaternary structure, homodimer.

The protein resides in the cytoplasm. It catalyses the reaction D-glyceraldehyde 3-phosphate = dihydroxyacetone phosphate. It functions in the pathway carbohydrate biosynthesis; gluconeogenesis. The protein operates within carbohydrate degradation; glycolysis; D-glyceraldehyde 3-phosphate from glycerone phosphate: step 1/1. Its function is as follows. Involved in the gluconeogenesis. Catalyzes stereospecifically the conversion of dihydroxyacetone phosphate (DHAP) to D-glyceraldehyde-3-phosphate (G3P). This is Triosephosphate isomerase from Clostridium beijerinckii (strain ATCC 51743 / NCIMB 8052) (Clostridium acetobutylicum).